The sequence spans 227 residues: Cytidylate kinase (227 aa).

10 to 18 lines the ATP pocket; it reads GPASSGKST.

The protein belongs to the cytidylate kinase family. Type 1 subfamily.

The protein resides in the cytoplasm. It carries out the reaction CMP + ATP = CDP + ADP. The enzyme catalyses dCMP + ATP = dCDP + ADP. The polypeptide is Cytidylate kinase (Streptococcus agalactiae serotype Ia (strain ATCC 27591 / A909 / CDC SS700)).